The primary structure comprises 482 residues: Pyruvate kinase (482 aa).

Arg37 contacts substrate. K(+) contacts are provided by Asn39, Ser41, and Asp71. Residue 39 to 42 coordinates ATP; the sequence is NFSH. Arg78 and Lys160 together coordinate ATP. Glu222 is a binding site for Mg(2+). 3 residues coordinate substrate: Gly245, Asp246, and Thr278. Asp246 contacts Mg(2+).

Belongs to the pyruvate kinase family. Homotetramer. It depends on Mg(2+) as a cofactor. K(+) serves as cofactor.

The enzyme catalyses pyruvate + ATP = phosphoenolpyruvate + ADP + H(+). It participates in carbohydrate degradation; glycolysis; pyruvate from D-glyceraldehyde 3-phosphate: step 5/5. The polypeptide is Pyruvate kinase (ttuE) (Agrobacterium vitis (Rhizobium vitis)).